A 470-amino-acid polypeptide reads, in one-letter code: D-serine/D-alanine/glycine transporter (470 aa).

Helical transmembrane passes span 30-50 (LIAI…KTIS), 51-71 (LAGP…FFVM), 102-122 (FTGW…VVAI), 128-148 (FWFP…LLLV), 162-182 (FWFA…GLVM), 211-231 (LSGF…IELV), 256-276 (IIMF…WSSV), 283-303 (FVEL…NFVV), 350-370 (FSCI…SVIG), 371-391 (AFTM…TIIL), 413-433 (PLGK…LVLL), and 441-461 (QALL…LFIG).

It belongs to the amino acid-polyamine-organocation (APC) superfamily. Amino acid transporter (AAT) (TC 2.A.3.1) family.

Its subcellular location is the cell inner membrane. The catalysed reaction is D-alanine(in) + H(+)(in) = D-alanine(out) + H(+)(out). It carries out the reaction D-serine(out) + H(+)(out) = D-serine(in) + H(+)(in). It catalyses the reaction glycine(in) + H(+)(in) = glycine(out) + H(+)(out). The enzyme catalyses D-cycloserine(in) + H(+)(in) = D-cycloserine(out) + H(+)(out). With respect to regulation, uptake of D-serine is inhibited by D-alanine, D-cycloserine, glycine and at high concentrations of D-threonine. Its function is as follows. Permease that is involved in the transport across the cytoplasmic membrane of D-alanine, D-serine and glycine. Is the only transporter of D-alanine. Transports D-serine less efficiently than DsdX. In addition, in minimal media, transports the broad spectrum antibiotic D-cycloserine into the cell. Transports D-cycloserine only in minimal media, and not in a complex medium, suggesting that CycA does not play a role in D-cycloserine transport when E.coli is grown in a complex or biologically relevant medium, probably due to competition from other CycA substrates present in the medium. The sequence is that of D-serine/D-alanine/glycine transporter (cycA) from Escherichia coli O6:H1 (strain CFT073 / ATCC 700928 / UPEC).